The primary structure comprises 1130 residues: Roquin-1 (1130 aa).

Positions 14, 17, 33, 35, 38, 50, and 53 each coordinate Zn(2+). The RING-type; degenerate zinc finger occupies 14 to 54 (CPICTQTFDETIRKPISLGCGHTVCKMCLNKLHRKACPFDQ). The interval 128 to 176 (VLSRPMQRKLVTLVHCQLVEEEGRIRAMRAARSLGERTVTELILQHQNP) is HEPN-N. The interval 177–326 (QQLSSNLWAA…MQSIIDKLQT (150 aa)) is ROQ. The interval 327–399 (PASFAQSVQE…GLVDYIQNHS (73 aa)) is HEPN-C. The C3H1-type zinc-finger motif lies at 413-441 (KYKTYMCRDMKQRGGCPRGASCTFAHSQE). The residue at position 462 (serine 462) is a Phosphoserine. Disordered regions lie at residues 493 to 567 (LPNG…DLPP) and 722 to 750 (PHPA…PSLD). A compositionally biased stretch (polar residues) spans 497–506 (IASSGSTVTQ). A phosphoserine mark is found at serine 531 and serine 535. 2 stretches are compositionally biased toward pro residues: residues 553–567 (NPHP…DLPP) and 732–746 (PRDP…PQPH). Phosphoserine occurs at positions 861, 1107, and 1110. A disordered region spans residues 1100 to 1130 (KTSSLNLSEDSEGGGDNNDSQRSGVVSNSAP). The span at 1116–1130 (NNDSQRSGVVSNSAP) shows a compositional bias: polar residues.

In terms of assembly, interacts with DDX6 and EDC4. Interacts with CCR4-NOT deadenylase complex. Interacts with RC3H1; the interaction is RNA independent. Proteolytically cleaved after Arg-510 and Arg-579 by MALT1 in activated CD4(+) T cells; cleavage at Arg-510 and Arg-579 is critical for promoting RC3H1 degradation in response to T-cell receptor (TCR) stimulation, and hence is necessary for prolonging the stability of a set of mRNAs controlling Th17 cell differentiation. As to expression, widely expressed, with highest levels in lymph node and thymus and slightly lesser amounts in brain, lung, and spleen (at protein level). Very weak expression in heart, muscle, and kidney (at protein level). Expressed in CD4(+) helper T-cells (at protein level).

It localises to the cytoplasm. It is found in the P-body. The protein resides in the cytoplasmic granule. It catalyses the reaction S-ubiquitinyl-[E2 ubiquitin-conjugating enzyme]-L-cysteine + [acceptor protein]-L-lysine = [E2 ubiquitin-conjugating enzyme]-L-cysteine + N(6)-ubiquitinyl-[acceptor protein]-L-lysine.. The protein operates within protein modification; protein ubiquitination. Its function is as follows. Post-transcriptional repressor of mRNAs containing a conserved stem loop motif, called constitutive decay element (CDE), which is often located in the 3'-UTR, as in HMGXB3, ICOS, IER3, NFKBID, NFKBIZ, PPP1R10, TNF, TNFRSF4 and in many more mRNAs. Cleaves translationally inactive mRNAs harboring a stem-loop (SL), often located in their 3'-UTRs, during the early phase of inflammation in a helicase UPF1-independent manner. Binds to CDE and promotes mRNA deadenylation and degradation. This process does not involve miRNAs. In follicular helper T (Tfh) cells, represses of ICOS and TNFRSF4/Ox40 expression, thus preventing spontaneous Tfh cell differentiation, germinal center B-cell differentiation in the absence of immunization and autoimmunity. In resting or LPS-stimulated macrophages, controls inflammation by suppressing TNF expression. Also recognizes CDE in its own mRNA and in that of paralogous RC3H2, possibly leading to feedback loop regulation. Inhibits cooperatively with ZC3H12A the differentiation of helper T cells Th17 in lungs. They repress target mRNA encoding the Th17 cell-promoting factors IL6, ICOS, REL, IRF4, NFKBID and NFKBIZ. The cooperation requires RNA-binding by RC3H1 and the nuclease activity of ZC3H12A. Recognizes and binds mRNAs containing a hexaloop stem-loop motif, called alternative decay element (ADE). Together with ZC3H12A, destabilizes TNFRSF4/OX40 mRNA by binding to the conserved stem loop structure in its 3'UTR. Able to interact with double-stranded RNA. miRNA-binding protein that regulates microRNA homeostasis. Enhances DICER-mediated processing of pre-MIR146a but reduces mature MIR146a levels through an increase of 3' end uridylation. Both inhibits ICOS mRNA expression and they may act together to exert the suppression. Acts as a ubiquitin E3 ligase. Pairs with E2 enzymes UBE2A, UBE2B, UBE2D2, UBE2F, UBE2G1, UBE2G2 and UBE2L3 and produces polyubiquitin chains. Shows the strongest activity when paired with UBE2N:UBE2V1 or UBE2N:UBE2V2 E2 complexes and generate both short and long polyubiquitin chains. This chain is Roquin-1, found in Mus musculus (Mouse).